We begin with the raw amino-acid sequence, 100 residues long: UPF0125 protein HD_1828 (100 aa).

The protein belongs to the UPF0125 (RnfH) family.

The polypeptide is UPF0125 protein HD_1828 (Haemophilus ducreyi (strain 35000HP / ATCC 700724)).